The primary structure comprises 255 residues: Hydroxyacylglutathione hydrolase (255 aa).

7 residues coordinate Zn(2+): histidine 56, histidine 58, aspartate 60, histidine 61, histidine 114, aspartate 133, and histidine 171.

Belongs to the metallo-beta-lactamase superfamily. Glyoxalase II family. In terms of assembly, monomer. The cofactor is Zn(2+).

The enzyme catalyses an S-(2-hydroxyacyl)glutathione + H2O = a 2-hydroxy carboxylate + glutathione + H(+). It participates in secondary metabolite metabolism; methylglyoxal degradation; (R)-lactate from methylglyoxal: step 2/2. In terms of biological role, thiolesterase that catalyzes the hydrolysis of S-D-lactoyl-glutathione to form glutathione and D-lactic acid. This Bradyrhizobium sp. (strain ORS 278) protein is Hydroxyacylglutathione hydrolase.